Consider the following 392-residue polypeptide: Chorismate synthase (392 aa).

Residues arginine 39 and arginine 45 each contribute to the NADP(+) site. FMN-binding positions include 131–133 (RSS), 255–256 (NA), glycine 300, 315–319 (KPIPT), and arginine 341.

The protein belongs to the chorismate synthase family. In terms of assembly, homotetramer. Requires FMNH2 as cofactor.

The enzyme catalyses 5-O-(1-carboxyvinyl)-3-phosphoshikimate = chorismate + phosphate. It participates in metabolic intermediate biosynthesis; chorismate biosynthesis; chorismate from D-erythrose 4-phosphate and phosphoenolpyruvate: step 7/7. Catalyzes the anti-1,4-elimination of the C-3 phosphate and the C-6 proR hydrogen from 5-enolpyruvylshikimate-3-phosphate (EPSP) to yield chorismate, which is the branch point compound that serves as the starting substrate for the three terminal pathways of aromatic amino acid biosynthesis. This reaction introduces a second double bond into the aromatic ring system. This Leuconostoc citreum (strain KM20) protein is Chorismate synthase.